The sequence spans 272 residues: HMP-PP phosphatase (272 aa).

The active-site Nucleophile is D8. 3 residues coordinate Mg(2+): D8, D10, and D212.

Belongs to the HAD-like hydrolase superfamily. Cof family. Mg(2+) serves as cofactor.

The catalysed reaction is 4-amino-2-methyl-5-(diphosphooxymethyl)pyrimidine + H2O = 4-amino-2-methyl-5-(phosphooxymethyl)pyrimidine + phosphate + H(+). In terms of biological role, catalyzes the hydrolysis of 4-amino-2-methyl-5-hydroxymethylpyrimidine pyrophosphate (HMP-PP) to 4-amino-2-methyl-5-hydroxymethylpyrimidine phosphate (HMP-P). In Enterobacter sp. (strain 638), this protein is HMP-PP phosphatase.